A 233-amino-acid chain; its full sequence is Nickel import system ATP-binding protein NikE (233 aa).

Positions 2-228 (IELKHVTFGY…DRHPYTKELV (227 aa)) constitute an ABC transporter domain. 35-42 (GESGCGKS) contributes to the ATP binding site.

This sequence belongs to the ABC transporter superfamily. As to quaternary structure, the complex is composed of two ATP-binding proteins (NikD and NikE), two transmembrane proteins (NikB and NikC) and a solute-binding protein (NikA).

It is found in the cell membrane. It carries out the reaction Ni(2+)(out) + ATP + H2O = Ni(2+)(in) + ADP + phosphate + H(+). In terms of biological role, part of the ABC transporter complex NikABCDE (Opp2) involved in nickel import. Probably responsible for energy coupling to the transport system. The chain is Nickel import system ATP-binding protein NikE from Staphylococcus aureus (strain MSSA476).